The sequence spans 287 residues: Lipoyl synthase (287 aa).

Residues Cys34, Cys39, Cys45, Cys60, Cys64, Cys67, and Ser273 each coordinate [4Fe-4S] cluster. Residues 46–262 enclose the Radical SAM core domain; that stretch reads WNKRHATVMI…KYIAYSKGFL (217 aa).

The protein belongs to the radical SAM superfamily. Lipoyl synthase family. The cofactor is [4Fe-4S] cluster.

It localises to the cytoplasm. It carries out the reaction [[Fe-S] cluster scaffold protein carrying a second [4Fe-4S](2+) cluster] + N(6)-octanoyl-L-lysyl-[protein] + 2 oxidized [2Fe-2S]-[ferredoxin] + 2 S-adenosyl-L-methionine + 4 H(+) = [[Fe-S] cluster scaffold protein] + N(6)-[(R)-dihydrolipoyl]-L-lysyl-[protein] + 4 Fe(3+) + 2 hydrogen sulfide + 2 5'-deoxyadenosine + 2 L-methionine + 2 reduced [2Fe-2S]-[ferredoxin]. It participates in protein modification; protein lipoylation via endogenous pathway; protein N(6)-(lipoyl)lysine from octanoyl-[acyl-carrier-protein]: step 2/2. Its function is as follows. Catalyzes the radical-mediated insertion of two sulfur atoms into the C-6 and C-8 positions of the octanoyl moiety bound to the lipoyl domains of lipoate-dependent enzymes, thereby converting the octanoylated domains into lipoylated derivatives. This Wolbachia pipientis wMel protein is Lipoyl synthase.